The following is a 220-amino-acid chain: Large ribosomal subunit protein uL1 (220 aa).

The protein belongs to the universal ribosomal protein uL1 family. In terms of assembly, part of the 50S ribosomal subunit.

Functionally, binds directly to 23S rRNA. The L1 stalk is quite mobile in the ribosome, and is involved in E site tRNA release. Protein L1 is also a translational repressor protein, it controls the translation of the L11 operon by binding to its mRNA. The chain is Large ribosomal subunit protein uL1 from Ehrlichia chaffeensis (strain ATCC CRL-10679 / Arkansas).